A 425-amino-acid polypeptide reads, in one-letter code: tRNA(Ile)-lysidine synthase (425 aa).

An ATP-binding site is contributed by 37-42; that stretch reads SGGKDS.

This sequence belongs to the tRNA(Ile)-lysidine synthase family.

The protein resides in the cytoplasm. The enzyme catalyses cytidine(34) in tRNA(Ile2) + L-lysine + ATP = lysidine(34) in tRNA(Ile2) + AMP + diphosphate + H(+). In terms of biological role, ligates lysine onto the cytidine present at position 34 of the AUA codon-specific tRNA(Ile) that contains the anticodon CAU, in an ATP-dependent manner. Cytidine is converted to lysidine, thus changing the amino acid specificity of the tRNA from methionine to isoleucine. The polypeptide is tRNA(Ile)-lysidine synthase (Leptospira borgpetersenii serovar Hardjo-bovis (strain JB197)).